The primary structure comprises 380 residues: Queuine tRNA-ribosyltransferase (380 aa).

The active-site Proton acceptor is Asp95. Residues Asp95 to Phe99, Asp149, Gln192, and Gly219 contribute to the substrate site. The tract at residues Gly250–Ser256 is RNA binding. The Nucleophile role is filled by Asp269. The tract at residues Thr274–Arg278 is RNA binding; important for wobble base 34 recognition. Residues Cys307, Cys309, Cys312, and His338 each contribute to the Zn(2+) site.

The protein belongs to the queuine tRNA-ribosyltransferase family. Homodimer. Within each dimer, one monomer is responsible for RNA recognition and catalysis, while the other monomer binds to the replacement base PreQ1. Zn(2+) is required as a cofactor.

The catalysed reaction is 7-aminomethyl-7-carbaguanine + guanosine(34) in tRNA = 7-aminomethyl-7-carbaguanosine(34) in tRNA + guanine. It participates in tRNA modification; tRNA-queuosine biosynthesis. In terms of biological role, catalyzes the base-exchange of a guanine (G) residue with the queuine precursor 7-aminomethyl-7-deazaguanine (PreQ1) at position 34 (anticodon wobble position) in tRNAs with GU(N) anticodons (tRNA-Asp, -Asn, -His and -Tyr). Catalysis occurs through a double-displacement mechanism. The nucleophile active site attacks the C1' of nucleotide 34 to detach the guanine base from the RNA, forming a covalent enzyme-RNA intermediate. The proton acceptor active site deprotonates the incoming PreQ1, allowing a nucleophilic attack on the C1' of the ribose to form the product. After dissociation, two additional enzymatic reactions on the tRNA convert PreQ1 to queuine (Q), resulting in the hypermodified nucleoside queuosine (7-(((4,5-cis-dihydroxy-2-cyclopenten-1-yl)amino)methyl)-7-deazaguanosine). The polypeptide is Queuine tRNA-ribosyltransferase (Geobacillus kaustophilus (strain HTA426)).